The chain runs to 140 residues: Putative nickel-responsive regulator 2 (140 aa).

His-77, His-88, His-90, and Cys-96 together coordinate Ni(2+).

Belongs to the transcriptional regulatory CopG/NikR family. Ni(2+) is required as a cofactor.

Its function is as follows. Transcriptional regulator. In Methanothermobacter thermautotrophicus (strain ATCC 29096 / DSM 1053 / JCM 10044 / NBRC 100330 / Delta H) (Methanobacterium thermoautotrophicum), this protein is Putative nickel-responsive regulator 2.